The primary structure comprises 570 residues: Sulfite reductase [NADPH] hemoprotein beta-component (570 aa).

Positions 434, 440, 479, and 483 each coordinate [4Fe-4S] cluster. Cys483 is a binding site for siroheme.

Belongs to the nitrite and sulfite reductase 4Fe-4S domain family. In terms of assembly, alpha(8)-beta(8). The alpha component is a flavoprotein, the beta component is a hemoprotein. Siroheme serves as cofactor. Requires [4Fe-4S] cluster as cofactor.

The catalysed reaction is hydrogen sulfide + 3 NADP(+) + 3 H2O = sulfite + 3 NADPH + 4 H(+). Its pathway is sulfur metabolism; hydrogen sulfide biosynthesis; hydrogen sulfide from sulfite (NADPH route): step 1/1. Functionally, component of the sulfite reductase complex that catalyzes the 6-electron reduction of sulfite to sulfide. This is one of several activities required for the biosynthesis of L-cysteine from sulfate. This chain is Sulfite reductase [NADPH] hemoprotein beta-component, found in Salmonella paratyphi B (strain ATCC BAA-1250 / SPB7).